The primary structure comprises 377 residues: Succinyl-diaminopimelate desuccinylase (377 aa).

His67 lines the Zn(2+) pocket. Asp69 is an active-site residue. Asp100 serves as a coordination point for Zn(2+). Catalysis depends on Glu134, which acts as the Proton acceptor. Zn(2+) is bound by residues Glu135, Glu163, and His349.

This sequence belongs to the peptidase M20A family. DapE subfamily. Homodimer. Zn(2+) is required as a cofactor. Requires Co(2+) as cofactor.

It carries out the reaction N-succinyl-(2S,6S)-2,6-diaminopimelate + H2O = (2S,6S)-2,6-diaminopimelate + succinate. Its pathway is amino-acid biosynthesis; L-lysine biosynthesis via DAP pathway; LL-2,6-diaminopimelate from (S)-tetrahydrodipicolinate (succinylase route): step 3/3. Catalyzes the hydrolysis of N-succinyl-L,L-diaminopimelic acid (SDAP), forming succinate and LL-2,6-diaminopimelate (DAP), an intermediate involved in the bacterial biosynthesis of lysine and meso-diaminopimelic acid, an essential component of bacterial cell walls. The sequence is that of Succinyl-diaminopimelate desuccinylase from Shewanella frigidimarina (strain NCIMB 400).